The sequence spans 103 residues: Protein SUP-1 (103 aa).

A signal peptide spans 1–16 (MMSYIALAACIGLAMA). At 17–75 (ANVDHDVKSAVNEVTTTKDGDTYCPVPLVGTKCGTSSIFHYWKCCGELNKECCFNLQTW) the chain is on the extracellular side. The chain crosses the membrane as a helical span at residues 76 to 96 (VWVTLALFGVIFIASFVISLV). Residues 97-103 (RCICCRK) are Cytoplasmic-facing.

As to expression, expressed in a subset of neurons and in body wall muscles. In the nervous system, expressed specifically in cholinergic motor neurons of the ventral nerve cord, a subset of cholinergic head neurons, anterior sublateral neurons, and body sublateral neurons (at protein level).

The protein localises to the cell membrane. It localises to the perikaryon. The protein resides in the cell projection. It is found in the synapse. Its subcellular location is the cytoplasmic vesicle. The protein localises to the secretory vesicle. It localises to the synaptic vesicle. In terms of biological role, may be involved in trafficking or stabilization of the vesicular acetylcholine transporter unc-17. This is Protein SUP-1 from Caenorhabditis elegans.